Consider the following 435-residue polypeptide: T-box transcription factor T (435 aa).

Residues 51–219 (LWLRFKELTN…YNPFAKAFLD (169 aa)) constitute a DNA-binding region (T-box). Disordered stretches follow at residues 280-310 (PALR…PSAC) and 384-412 (APLG…DVPD). Residues 297-310 (RNNSPTYSDNPSAC) show a composition bias toward polar residues.

Monomer. Binds DNA as a monomer.

The protein resides in the nucleus. Involved in the transcriptional regulation of genes required for mesoderm formation and differentiation. Binds to a palindromic site (called T site) and activates gene transcription when bound to such a site. The protein is T-box transcription factor T of Canis lupus familiaris (Dog).